Consider the following 303-residue polypeptide: Growth/differentiation factor 15 (303 aa).

The N-terminal stretch at 1 to 30 (MAPPALQAQPPGGSQLRFLLFLLLLLLLLS) is a signal peptide. Residues 31 to 188 (WPSQGDALAM…LRVAAGRGRR (158 aa)) constitute a propeptide that is removed on maturation. Asn-71 carries an N-linked (GlcNAc...) asparagine glycan. Disulfide bonds link Cys-198/Cys-205, Cys-206/Cys-269, Cys-235/Cys-300, and Cys-239/Cys-302.

This sequence belongs to the TGF-beta family. As to quaternary structure, homodimer; disulfide-linked. Interacts with GFRAL and RET; ligand of GFRAL, which mediates GDF15 internalization and cellular signaling through interaction with RET via the formation of a 2:2:2 ternary complex composed of GDF15, GFRAL and RET. As to expression, detected in plasma (at protein level). Highly expressed in liver. Expressed in the distal small intestine, colon and kidney. Expressed in skeletal muscle in response to mitochondrial stress. Expressed by cardiomyocytes, expression is highly increased in heart diseases. Also detected in subcutaneous fat.

It is found in the secreted. Hormone produced in response to various stresses to confer information about those stresses to the brain, and trigger an aversive response, characterized by nausea and/or loss of appetite. The aversive response is both required to reduce continuing exposure to those stresses at the time of exposure and to promote avoidance behavior in the future. Acts by binding to its receptor, GFRAL, activating GFRAL-expressing neurons localized in the area postrema and nucleus tractus solitarius of the brainstem. It then triggers the activation of neurons localized within the parabrachial nucleus and central amygdala, which constitutes part of the 'emergency circuit' that shapes responses to stressful conditions. The GDF15-GFRAL signal induces expression of genes involved in metabolism, such as lipid metabolism in adipose tissues. Required for avoidance behavior in response to food allergens: induced downstream of mast cell activation to promote aversion and minimize harmful effects of exposure to noxious substances. In addition to suppress appetite, also promotes weight loss by enhancing energy expenditure in muscle: acts by increasing calcium futile cycling in muscle. Contributes to the effect of metformin, an anti-diabetic drug, on appetite reduction and weight loss: produced in the kidney in response to metformin treatment, thereby activating the GDF15-GFRAL response, leading to reduced appetite and weight. Produced in response to anticancer drugs, such as camptothecin or cisplatin, promoting nausea and contributing to malnutrition. Overproduced in many cancers, promoting anorexia in cancer (cachexia). Responsible for the risk of nausea during pregnancy: high levels of GDF15 during pregnancy, mostly originating from embryos, are associated with increased nausea. Maternal sensitivity to nausea is probably determined by pre-pregnancy exposure to GDF15, females with naturally high level of GDF15 being less susceptible to nausea than female mice with low levels of GDF15 before pregnancy. Promotes metabolic adaptation in response to systemic inflammation caused by bacterial and viral infections in order to promote tissue tolerance and prevent tissue damage. Required for tissue tolerance in response to myocardial infarction by acting as an inhibitor of leukocyte integring activation, thereby protecting against cardiac rupture. Inhibits growth hormone signaling on hepatocytes. This chain is Growth/differentiation factor 15, found in Mus musculus (Mouse).